Consider the following 37-residue polypeptide: Large ribosomal subunit protein bL36c (37 aa).

This sequence belongs to the bacterial ribosomal protein bL36 family.

It localises to the plastid. Its subcellular location is the chloroplast. The sequence is that of Large ribosomal subunit protein bL36c (rpl36) from Porphyra purpurea (Red seaweed).